The primary structure comprises 741 residues: Endoplasmic reticulum membrane sensor NFE2L1 (741 aa).

A helical; Signal-anchor for type II membrane protein transmembrane segment spans residues 7–24 (YLTEGLLQFTILLSLIGV). 2 disordered regions span residues 108–148 (DPEG…TEQG) and 198–220 (QKEQ…WSGE). A compositionally biased stretch (polar residues) spans 113–131 (VSGSQPNSGLALESSSGLQ). Residues 191–199 (VFDYSHRQK) form a cholesterol recognition/amino acid consensus (CRAC) region region. The span at 198–216 (QKEQDVDKELQDGREREDT) shows a compositional bias: basic and acidic residues. Residues Asn-319 and Asn-331 are each glycosylated (N-linked (GlcNAc...) asparagine). Residues 350–354 (SPEVE) are CPD. N-linked (GlcNAc...) asparagine glycosylation occurs at Asn-394. Disordered stretches follow at residues 441–501 (EEEF…DSET) and 551–582 (SALD…QMSR). A Destruction motif motif is present at residues 447–451 (DSGLS). Low complexity predominate over residues 447-492 (DSGLSLDSSHSPSSLSSSEGSSSSSSSSSSSSASSSASSSFSEEGA). Ser-497 carries the post-translational modification Phosphoserine; by CK2. Over residues 567-582 (GSKEKQADFLDKQMSR) the composition is skewed to basic and acidic residues. Ser-568 is subject to Phosphoserine. The 64-residue stretch at 623 to 686 (LIRDIRRRGK…RQMKQKVQSL (64 aa)) folds into the bZIP domain. The segment at 625-644 (RDIRRRGKNKMAAQNCRKRK) is basic motif. Positions 651-665 (LERDVEDLQRDKARL) are leucine-zipper. Residues 722–741 (RTMADQQARRQERKPKDRRK) are disordered. The Nuclear localization signal signature appears at 730–737 (RRQERKPK). Positions 732-741 (QERKPKDRRK) are enriched in basic residues.

It belongs to the bZIP family. CNC subfamily. Interacts with KEAP1. As to quaternary structure, interacts (via CPD region) with FBXW7; leading to its ubiquitination and degradation. Interacts with SYVN1/HRD1; leading to its ubiquitination and degradation. Interacts (when ubiquitinated) with DDI2; leading to its cleavage. In terms of assembly, interacts (via the bZIP domain) with small MAF protein (MAFF, MAFG or MAFK); required for binding to antioxidant response elements (AREs) on DNA. Interacts (via Destruction motif) with BTRC; leading to its ubiquitination and degradation. Interacts with CEBPB; the heterodimer represses expression of DSPP during odontoblast differentiation. Interacts with MOTS-c, a peptide produced by the mitochondrially encoded 12S rRNA MT-RNR1. Post-translationally, cleaved at Leu-104 by the aspartyl protease DDI2 following retrotranslocation, releasing the protein from the endoplasmic reticulum membrane and forming the transcription factor NRF1 that translocates into the nucleus. Ubiquitination is prerequisite for cleavage by aspartyl protease DDI2. N-glycosylated in normal conditions, when it has a single-pass type II membrane protein topology, with the DNA-binding domain facing the endoplasmic reticulum lumen. Deglycosylated during retrotranslocation to the cytosolic side of the membrane, to have a single-pass type III membrane protein topology with the major part of the protein facing the cytosol. In terms of processing, ubiquitinated by the SCF(FBXW7) complex and SYVN1/HRD1, leading to its degradation by the proteasome. Ubiquitinated during retrotranslocation to the cytosolic side of the membrane: ubiquitination does not lead to degradation and is required for processing by the aspartyl protease DDI2 and subsequent release from the endoplasmic reticulum membrane. Post-translationally, phosphorylation by CK2 at Ser-497 inhibits transcription factor activity, possibly by affecting DNA-binding activity. Phosphorylation at Ser-568 is required for interaction with CEBPB. Ubiquitinated by the SCF(BTRC) complex in the nucleus, leading to its degradation by the proteasome. Isoform 1: Widely expressed including kidney, brown fat, white fat, large intestine, small intestine, stomach, lung, brain and liver. Isoform 1: Expressed in mouse embryonic fibroblasts (MEF). Isoform 2: Widely expressed including kidney, brown fat, white fat, large intestine, small intestine, stomach, lung, brain and liver. Isoform 2: levels in white fat, lung and liver are increased compared to isoform 1 (at protein level). Isoform 2: levels are elevated in brown fat and brain, but are reduced in liver compared to isoform 1 levels. Isoform 2: Expressed in mouse embryonic fibroblasts (MEF).

Its subcellular location is the endoplasmic reticulum membrane. It localises to the nucleus. It is found in the cytoplasm. Its function is as follows. Endoplasmic reticulum membrane sensor that translocates into the nucleus in response to various stresses to act as a transcription factor. Constitutes a precursor of the transcription factor NRF1. Able to detect various cellular stresses, such as cholesterol excess, oxidative stress or proteasome inhibition. In response to stress, it is released from the endoplasmic reticulum membrane following cleavage by the protease DDI2 and translocates into the nucleus to form the transcription factor NRF1. Acts as a key sensor of cholesterol excess: in excess cholesterol conditions, the endoplasmic reticulum membrane form of the protein directly binds cholesterol via its CRAC motif, preventing cleavage and release of the transcription factor NRF1, thereby allowing expression of genes promoting cholesterol removal, such as CD36. Involved in proteasome homeostasis: in response to proteasome inhibition, it is released from the endoplasmic reticulum membrane, translocates to the nucleus and activates expression of genes encoding proteasome subunits. In terms of biological role, CNC-type bZIP family transcription factor that translocates to the nucleus and regulates expression of target genes in response to various stresses. Heterodimerizes with small-Maf proteins (MAFF, MAFG or MAFK) and binds DNA motifs including the antioxidant response elements (AREs), which regulate expression of genes involved in oxidative stress response. Activates or represses expression of target genes, depending on the context. Plays a key role in cholesterol homeostasis by acting as a sensor of cholesterol excess: in low cholesterol conditions, translocates into the nucleus and represses expression of genes involved in defense against cholesterol excess, such as CD36. In excess cholesterol conditions, the endoplasmic reticulum membrane form of the protein directly binds cholesterol via its CRAC motif, preventing cleavage and release of the transcription factor NRF1, thereby allowing expression of genes promoting cholesterol removal. Critical for redox balance in response to oxidative stress: acts by binding the AREs motifs on promoters and mediating activation of oxidative stress response genes, such as GCLC, GCLM, GSS, MT1 and MT2. Plays an essential role during fetal liver hematopoiesis: probably has a protective function against oxidative stress and is involved in lipid homeostasis in the liver. Involved in proteasome homeostasis: in response to proteasome inhibition, mediates the 'bounce-back' of proteasome subunits by translocating into the nucleus and activating expression of genes encoding proteasome subunits. Also involved in regulating glucose flux. Together with CEBPB; represses expression of DSPP during odontoblast differentiation. In response to ascorbic acid induction, activates expression of SP7/Osterix in osteoblasts. Functionally, transcription factor that binds the antioxidant response elements (ARE) consensus sequence on promoters and activates their expression. Transcription factor that binds the extended kappa 3 site of the TNF-alpha promoter after Fc gamma RIII stimulation and participates in the induction of this cytokine. The protein is Endoplasmic reticulum membrane sensor NFE2L1 of Mus musculus (Mouse).